The chain runs to 1073 residues: Carbamoyl phosphate synthase large chain (1073 aa).

Residues 1 to 403 are carboxyphosphate synthetic domain; sequence MPKRTDIKSI…SLQKALRGLE (403 aa). Positions 129, 169, 175, 176, 208, 210, 215, 241, 242, 243, 285, and 299 each coordinate ATP. Residues 133–328 enclose the ATP-grasp 1 domain; that stretch reads DKAMKSIGLA…IARVAAKLAV (196 aa). The Mg(2+) site is built by Q285, E299, and N301. Mn(2+) contacts are provided by Q285, E299, and N301. An oligomerization domain region spans residues 404–553; that stretch reads VGVCGLDPKL…YSTYEEECEA (150 aa). Residues 554-935 form a carbamoyl phosphate synthetic domain region; sequence NPSTRDKIMI…AFAKAQMGAS (382 aa). The region spanning 678 to 869 is the ATP-grasp 2 domain; the sequence is QQMVERLNLR…LAMIAARVMA (192 aa). ATP contacts are provided by R714, H753, L755, E760, G785, V786, H787, S788, Q828, and E840. Mg(2+) contacts are provided by Q828, E840, and N842. Residues Q828, E840, and N842 each contribute to the Mn(2+) site. An MGS-like domain is found at 936 to 1073; the sequence is EVLPTGGTAF…LQDLHAGLKA (138 aa). Positions 936–1073 are allosteric domain; the sequence is EVLPTGGTAF…LQDLHAGLKA (138 aa).

It belongs to the CarB family. As to quaternary structure, composed of two chains; the small (or glutamine) chain promotes the hydrolysis of glutamine to ammonia, which is used by the large (or ammonia) chain to synthesize carbamoyl phosphate. Tetramer of heterodimers (alpha,beta)4. Requires Mg(2+) as cofactor. It depends on Mn(2+) as a cofactor.

It carries out the reaction hydrogencarbonate + L-glutamine + 2 ATP + H2O = carbamoyl phosphate + L-glutamate + 2 ADP + phosphate + 2 H(+). The catalysed reaction is hydrogencarbonate + NH4(+) + 2 ATP = carbamoyl phosphate + 2 ADP + phosphate + 2 H(+). It participates in amino-acid biosynthesis; L-arginine biosynthesis; carbamoyl phosphate from bicarbonate: step 1/1. The protein operates within pyrimidine metabolism; UMP biosynthesis via de novo pathway; (S)-dihydroorotate from bicarbonate: step 1/3. In terms of biological role, large subunit of the glutamine-dependent carbamoyl phosphate synthetase (CPSase). CPSase catalyzes the formation of carbamoyl phosphate from the ammonia moiety of glutamine, carbonate, and phosphate donated by ATP, constituting the first step of 2 biosynthetic pathways, one leading to arginine and/or urea and the other to pyrimidine nucleotides. The large subunit (synthetase) binds the substrates ammonia (free or transferred from glutamine from the small subunit), hydrogencarbonate and ATP and carries out an ATP-coupled ligase reaction, activating hydrogencarbonate by forming carboxy phosphate which reacts with ammonia to form carbamoyl phosphate. This Pseudomonas syringae pv. tomato (strain ATCC BAA-871 / DC3000) protein is Carbamoyl phosphate synthase large chain.